The following is a 302-amino-acid chain: tRNA-cytidine(32) 2-sulfurtransferase (302 aa).

Residues 45 to 50 (SGGKDS) carry the PP-loop motif motif. Positions 120, 123, and 211 each coordinate [4Fe-4S] cluster.

The protein belongs to the TtcA family. As to quaternary structure, homodimer. It depends on Mg(2+) as a cofactor. Requires [4Fe-4S] cluster as cofactor.

The protein localises to the cytoplasm. The enzyme catalyses cytidine(32) in tRNA + S-sulfanyl-L-cysteinyl-[cysteine desulfurase] + AH2 + ATP = 2-thiocytidine(32) in tRNA + L-cysteinyl-[cysteine desulfurase] + A + AMP + diphosphate + H(+). The protein operates within tRNA modification. Its function is as follows. Catalyzes the ATP-dependent 2-thiolation of cytidine in position 32 of tRNA, to form 2-thiocytidine (s(2)C32). The sulfur atoms are provided by the cysteine/cysteine desulfurase (IscS) system. This Aeromonas hydrophila subsp. hydrophila (strain ATCC 7966 / DSM 30187 / BCRC 13018 / CCUG 14551 / JCM 1027 / KCTC 2358 / NCIMB 9240 / NCTC 8049) protein is tRNA-cytidine(32) 2-sulfurtransferase.